We begin with the raw amino-acid sequence, 730 residues long: Synaptogenesis protein syg-1 (730 aa).

The N-terminal stretch at 1–18 (MVRWQTWPLLLLFQLVTC) is a signal peptide. Over 19–551 (QQLQQRIVEA…WIVITAKFDR (533 aa)) the chain is Extracellular. 5 Ig-like domains span residues 23 to 123 (QRIV…AKLT), 131 to 265 (PKIV…VKLS), 270 to 352 (PQIN…IKLN), 357 to 433 (ARIM…QILS), and 441 to 540 (PPTV…RNIL). Disulfide bonds link Cys-44/Cys-104, Cys-152/Cys-246, Cys-292/Cys-336, Cys-378/Cys-420, and Cys-462/Cys-519. 2 N-linked (GlcNAc...) asparagine glycosylation sites follow: Asn-93 and Asn-206. The helical transmembrane segment at 552–572 (MVALAIISAGVLLVSLLCCLC) threads the bilayer. Residues 573–730 (MCRSNCRSRK…RPISRTSTHV (158 aa)) lie on the Cytoplasmic side of the membrane.

Belongs to the immunoglobulin superfamily. In terms of assembly, interacts with skr-1. Interacts with syg-2. Interacts with the WAVE regulatory complex; the interaction leads to formation of a synaptic F-actin network that is required for synapse formation and axon branching. Expression in head motor neurons, occasionally in HSN neurons and weakly in other cells in the vulval region. Expressed in the primary synapse region of HSNL motor neuron.

It localises to the cell membrane. The protein resides in the cell projection. The protein localises to the axon. It is found in the synapse. Its function is as follows. Cell adhesion protein. Involved in synapse formation in the HSNL egg-laying motor neuron. Inhibits assembly of the SCF(sel-10) E3 ubiquitin ligase complex at synapses, and protects them from elimination. Also required for F-actin assembly at the synaptic region and for axon branch formation. The protein is Synaptogenesis protein syg-1 of Caenorhabditis elegans.